The primary structure comprises 199 residues: GTP cyclohydrolase-2 (199 aa).

49-53 contacts GTP; the sequence is RIHSE. Positions 54, 65, and 67 each coordinate Zn(2+). Residues Q70, 92–94, and T114 each bind GTP; that span reads EGR. D126 functions as the Proton acceptor in the catalytic mechanism. Residue R128 is the Nucleophile of the active site. GTP is bound by residues T149 and K154. Positions 172–199 are disordered; the sequence is ETGRNPHNSHYLETKRGKLGHLLEGDSE.

Belongs to the GTP cyclohydrolase II family. It depends on Zn(2+) as a cofactor.

The catalysed reaction is GTP + 4 H2O = 2,5-diamino-6-hydroxy-4-(5-phosphoribosylamino)-pyrimidine + formate + 2 phosphate + 3 H(+). It functions in the pathway cofactor biosynthesis; riboflavin biosynthesis; 5-amino-6-(D-ribitylamino)uracil from GTP: step 1/4. Functionally, catalyzes the conversion of GTP to 2,5-diamino-6-ribosylamino-4(3H)-pyrimidinone 5'-phosphate (DARP), formate and pyrophosphate. This is GTP cyclohydrolase-2 from Teredinibacter turnerae (strain ATCC 39867 / T7901).